The following is a 414-amino-acid chain: Seminal vesicle secretory protein 2 (414 aa).

The first 22 residues, 1-22 (MKSSVFILSLFLLLERQAAVVG), serve as a signal peptide directing secretion. Residue Gln23 is modified to Pyrrolidone carboxylic acid. 13 repeat units span residues 108–120 (ESQIKSFRQVKSS), 127–139 (GSQLKSFGQVKSS), 140–152 (ESQLKSFGQVKAS), 153–165 (GSQLKSFGQVKAS), 166–178 (GSQLKSYGQMKSS), 179–191 (GSQVKSFGQMKSS), 192–204 (GSQVKSFGQMKAS), 205–217 (ESQIKSFGQRKSQ), 224–236 (YGQMKSYGQTKSL), 237–249 (ESQAKSFGQVKSQ), 257–269 (YGQRKSYGEETQL), 275–287 (DAQLKSYGQQKSQ), and 299–311 (SAQLKSFGQQKSL). Positions 108–311 (ESQIKSFRQV…LKSFGQQKSL (204 aa)) are 13 X 13 AA tandem repeats. Disordered stretches follow at residues 170–228 (KSYG…GQMK), 240–294 (AKSF…SFSQ), and 306–369 (GQQK…FGQE). The segment covering 240 to 259 (AKSFGQVKSQSGQMKSSYGQ) has biased composition (polar residues). The segment covering 277-294 (QLKSYGQQKSQKQSSFSQ) has biased composition (low complexity). Composition is skewed to polar residues over residues 306 to 321 (GQQKSLKGFSQQTQQK) and 342 to 351 (SVQQKSTQQM). A compositionally biased stretch (low complexity) spans 358-369 (SQFGQQRQFGQE).

Post-translationally, the repeating unit appears to be involved in the formation of the copulatory plug via a transglutaminase reaction cross-linking glutamine and lysine residues.

In terms of biological role, the rat seminal vesicle contains six major androgen-dependent secretory proteins referred to as SVS I-VI. The SVS I-III proteins appear to be components of the rat copulatory plug, with the SVS II protein being the major component. This is Seminal vesicle secretory protein 2 (Svs2) from Rattus norvegicus (Rat).